Consider the following 581-residue polypeptide: AP2-like ethylene-responsive transcription factor AIL6 (581 aa).

2 disordered regions span residues 105–132 (VRYS…HHNQ) and 205–240 (NNTN…TDSE). Composition is skewed to low complexity over residues 108-122 (SDNS…SLTQ) and 218-232 (RGNN…NNNN). DNA-binding regions (AP2/ERF) lie at residues 268-331 (IYRG…TNFP) and 367-425 (IYRG…TNFE).

Belongs to the AP2/ERF transcription factor family. AP2 subfamily. In terms of tissue distribution, expressed in roots, seedlings, hypocotyl, inflorescence, siliques, and pistils. Also detected at low levels in leaves.

The protein resides in the nucleus. Probably acts as a transcriptional activator. Binds to the GCC-box pathogenesis-related promoter element. May be involved in the regulation of gene expression by stress factors and by components of stress signal transduction pathways. The polypeptide is AP2-like ethylene-responsive transcription factor AIL6 (Arabidopsis thaliana (Mouse-ear cress)).